We begin with the raw amino-acid sequence, 31 residues long: Cytochrome b6-f complex subunit 6 (31 aa).

The helical transmembrane segment at 4–24 threads the bilayer; sequence IISYFGFLFGALTLALILFIG.

It belongs to the PetL family. In terms of assembly, the 4 large subunits of the cytochrome b6-f complex are cytochrome b6, subunit IV (17 kDa polypeptide, PetD), cytochrome f and the Rieske protein, while the 4 small subunits are PetG, PetL, PetM and PetN. The complex functions as a dimer.

The protein resides in the plastid. Its subcellular location is the chloroplast thylakoid membrane. In terms of biological role, component of the cytochrome b6-f complex, which mediates electron transfer between photosystem II (PSII) and photosystem I (PSI), cyclic electron flow around PSI, and state transitions. PetL is important for photoautotrophic growth as well as for electron transfer efficiency and stability of the cytochrome b6-f complex. This chain is Cytochrome b6-f complex subunit 6, found in Physcomitrium patens (Spreading-leaved earth moss).